The sequence spans 101 residues: UPF0473 protein MGAS10750_Spy1887 (101 aa).

This sequence belongs to the UPF0473 family.

In Streptococcus pyogenes serotype M4 (strain MGAS10750), this protein is UPF0473 protein MGAS10750_Spy1887.